The sequence spans 156 residues: UPF0266 membrane protein YobD (156 aa).

Residues 1–5 (MTITD) lie on the Periplasmic side of the membrane. A helical transmembrane segment spans residues 6-26 (LVLILFIAALLAYALYDQFIM). Residues 27–44 (PRRNGPTLLSIALLRRGR) lie on the Cytoplasmic side of the membrane. The chain crosses the membrane as a helical span at residues 45-65 (VDSVIFVGLVAILIYNNVTSH). Position 66 (Gly-66) is a topological domain, periplasmic. The helical transmembrane segment at 67 to 87 (AQMTTWLLSALALMGFYIFWI) threads the bilayer. Over 88-156 (RTPRIIFKQR…LLIENQYLKI (69 aa)) the chain is Cytoplasmic.

This sequence belongs to the UPF0266 family.

The protein resides in the cell inner membrane. The sequence is that of UPF0266 membrane protein YobD (yobD) from Salmonella typhimurium (strain LT2 / SGSC1412 / ATCC 700720).